Consider the following 229-residue polypeptide: Enolase-phosphatase E1 (229 aa).

This sequence belongs to the HAD-like hydrolase superfamily. MasA/MtnC family. As to quaternary structure, monomer. The cofactor is Mg(2+).

It catalyses the reaction 5-methylsulfanyl-2,3-dioxopentyl phosphate + H2O = 1,2-dihydroxy-5-(methylsulfanyl)pent-1-en-3-one + phosphate. It functions in the pathway amino-acid biosynthesis; L-methionine biosynthesis via salvage pathway; L-methionine from S-methyl-5-thio-alpha-D-ribose 1-phosphate: step 3/6. The protein operates within amino-acid biosynthesis; L-methionine biosynthesis via salvage pathway; L-methionine from S-methyl-5-thio-alpha-D-ribose 1-phosphate: step 4/6. Its function is as follows. Bifunctional enzyme that catalyzes the enolization of 2,3-diketo-5-methylthiopentyl-1-phosphate (DK-MTP-1-P) into the intermediate 2-hydroxy-3-keto-5-methylthiopentenyl-1-phosphate (HK-MTPenyl-1-P), which is then dephosphorylated to form the acireductone 1,2-dihydroxy-3-keto-5-methylthiopentene (DHK-MTPene). This is Enolase-phosphatase E1 from Pectobacterium atrosepticum (strain SCRI 1043 / ATCC BAA-672) (Erwinia carotovora subsp. atroseptica).